Here is a 383-residue protein sequence, read N- to C-terminus: Delta(12) acyl-lipid conjugase (11E,13E-forming) (383 aa).

The interval Met-1–Pro-30 is disordered. Basic and acidic residues predominate over residues Thr-12–His-26. 2 consecutive transmembrane segments (helical) span residues Val-56 to Met-76 and Val-84 to Gly-104. Residues His-105–His-109 carry the Histidine box-1 motif. The short motif at His-141–His-145 is the Histidine box-2 element. The next 3 helical transmembrane spans lie at Phe-179–Asn-199, Val-225–Ala-245, and Val-249–Ile-269. A Histidine box-3 motif is present at residues His-315–His-319.

This sequence belongs to the fatty acid desaturase type 1 family. Expressed in developing seeds, but not in leaves.

The protein resides in the membrane. The enzyme catalyses a (9Z,12Z)-octadecadienoyl-containing glycerolipid + 2 Fe(II)-[cytochrome b5] + O2 + 2 H(+) = a (9Z,11E,13E)-octadecatrienoyl-containing glycerolipid + 2 Fe(III)-[cytochrome b5] + 2 H2O. The catalysed reaction is (9Z,12Z,15Z)-octadecatrienoyl-containing glycerolipid + 2 Fe(II)-[cytochrome b5] + O2 + 2 H(+) = a (9Z,11E,13E,15Z)-octadecatetraenoyl-containing glycerolipid + 2 Fe(III)-[cytochrome b5] + 2 H2O. It participates in lipid metabolism; polyunsaturated fatty acid biosynthesis. Its function is as follows. Converts linoleic acid to alpha-eleostearic acid (18:3(9Z,11E,13E)) and alpha-linolenic acid to alpha-parinaric acid (18:4(9Z,11E, 13E, 15Z)). Converts a single cis double bond at carbon 12 to two conjugated trans bonds at positions 11 and 13. The polypeptide is Delta(12) acyl-lipid conjugase (11E,13E-forming) (Impatiens balsamina (Balsam)).